The primary structure comprises 570 residues: Double-stranded RNA-binding protein Staufen homolog 2 (570 aa).

The region spanning 8–75 is the DRBM 1 domain; sequence TAMCLVNELA…ANKALTESTL (68 aa). Disordered stretches follow at residues 71–94 and 181–203; these read TESTLPKPVQKPPKSNVNNNPGSI and NEPIPERSPQNGESGKDVDDDKD. Residues 83–94 are compositionally biased toward polar residues; that stretch reads PKSNVNNNPGSI. One can recognise a DRBM 2 domain in the interval 95 to 181; it reads TPTVELNGLA…AMKALQALQN (87 aa). The residue at position 188 (serine 188) is a Phosphoserine. Residues 194–203 show a composition bias toward basic and acidic residues; sequence SGKDVDDDKD. 2 DRBM domains span residues 207–274 and 307–375; these read SEIS…ELKK and NPIS…QLGY. 2 short sequence motifs (nuclear localization signal) span residues 273 to 291 and 373 to 412; these read KKLPPLPVVEKPKLFFKKR and LGYKASTNLQDQLEKTGENKGWSGPKPGFPEPTNNTPKGI. A required for dendritic transport region spans residues 381–570; sequence LQDQLEKTGE…QDCKKSNSAV (190 aa). Positions 387 to 409 are disordered; sequence KTGENKGWSGPKPGFPEPTNNTP. Position 395 is a phosphoserine (serine 395). The residue at position 405 (threonine 405) is a Phosphothreonine. 5 positions are modified to phosphoserine: serine 416, serine 426, serine 440, serine 455, and serine 492. Residues 528–570 are disordered; sequence DGAMNIEKGSLEKQAKHLREKADNNQAPPGSIAQDCKKSNSAV. Basic and acidic residues predominate over residues 536–550; that stretch reads GSLEKQAKHLREKAD.

In terms of assembly, interacts with the exportin XPO5. This requires RNA and RAN bound to GTP. Interacts with microtubules. Isoform 2 and isoform 3 may also interact with ribosomes, and this association is independent of translation. Identified in a mRNP complex, at least composed of DHX9, DDX3X, ELAVL1, HNRNPU, IGF2BP1, ILF3, PABPC1, PCBP2, PTBP2, STAU1, STAU2, SYNCRIP and YBX1. Interacts with TRIM71 (via NHL repeats) in an RNA-dependent manner.

It is found in the cytoplasm. It localises to the nucleus. Its subcellular location is the nucleolus. The protein resides in the endoplasmic reticulum. RNA-binding protein required for the microtubule-dependent transport of neuronal RNA from the cell body to the dendrite. As protein synthesis occurs within the dendrite, the localization of specific mRNAs to dendrites may be a prerequisite for neurite outgrowth and plasticity at sites distant from the cell body. The protein is Double-stranded RNA-binding protein Staufen homolog 2 (STAU2) of Homo sapiens (Human).